A 286-amino-acid chain; its full sequence is Protein FAM87A (286 aa).

The next 2 membrane-spanning stretches (helical) occupy residues 68 to 88 (YLHS…ETAL) and 161 to 181 (SFFV…GDML).

Belongs to the FAM87 family.

The protein resides in the membrane. This Homo sapiens (Human) protein is Protein FAM87A (FAM87A).